The sequence spans 495 residues: Probable cobyric acid synthase (495 aa).

One can recognise a GATase cobBQ-type domain in the interval 256–441; that stretch reads DVDIAVIRLT…LHGLFDNVNI (186 aa). The active-site Nucleophile is Cys334. Residue His433 is part of the active site.

It belongs to the CobB/CobQ family. CobQ subfamily.

It participates in cofactor biosynthesis; adenosylcobalamin biosynthesis. Its function is as follows. Catalyzes amidations at positions B, D, E, and G on adenosylcobyrinic A,C-diamide. NH(2) groups are provided by glutamine, and one molecule of ATP is hydrogenolyzed for each amidation. In Methanococcoides burtonii (strain DSM 6242 / NBRC 107633 / OCM 468 / ACE-M), this protein is Probable cobyric acid synthase.